The chain runs to 252 residues: Triosephosphate isomerase (252 aa).

9-11 serves as a coordination point for substrate; that stretch reads NWK. The Electrophile role is filled by H95. E167 functions as the Proton acceptor in the catalytic mechanism. Substrate is bound by residues G173, S211, and 232–233; that span reads GG.

This sequence belongs to the triosephosphate isomerase family. As to quaternary structure, homodimer.

The protein localises to the cytoplasm. It catalyses the reaction D-glyceraldehyde 3-phosphate = dihydroxyacetone phosphate. Its pathway is carbohydrate biosynthesis; gluconeogenesis. It functions in the pathway carbohydrate degradation; glycolysis; D-glyceraldehyde 3-phosphate from glycerone phosphate: step 1/1. Involved in the gluconeogenesis. Catalyzes stereospecifically the conversion of dihydroxyacetone phosphate (DHAP) to D-glyceraldehyde-3-phosphate (G3P). The protein is Triosephosphate isomerase of Marinobacter nauticus (strain ATCC 700491 / DSM 11845 / VT8) (Marinobacter aquaeolei).